A 426-amino-acid chain; its full sequence is Pannexin-1 (426 aa).

The Cytoplasmic portion of the chain corresponds to 1–40 (MAIAHLATEYVFSDFLLKEPTEPKFKGLRLELAVDKMVTC). An S-nitrosocysteine modification is found at Cys40. A helical transmembrane segment spans residues 41-61 (IAVGLPLLLISLAFAQEISIG). Residues 62-106 (TQISCFSPSSFSWRQAAFVDSYCWAAVQQKSSLQSESGNLPLWLH) lie on the Extracellular side of the membrane. Cystine bridges form between Cys66/Cys264 and Cys84/Cys245. Residues 107-127 (KFFPYILLLFAILLYLPALFW) traverse the membrane as a helical segment. The Cytoplasmic portion of the chain corresponds to 128 to 216 (RFSAAPHLCS…HLIMKYISCR (89 aa)). A Phosphotyrosine modification is found at Tyr198. The chain crosses the membrane as a helical span at residues 217-237 (LVTFVVILLACIYLSYYFSLS). Residues 238–277 (SLSDEFLCSIKSGVLKNDSTIPDRFQCKLIAVGIFQLLSL) are Extracellular-facing. Asn254 is a glycosylation site (N-linked (GlcNAc...) asparagine). The chain crosses the membrane as a helical span at residues 278 to 298 (INLIVYALLIPVVVYTFFIPF). Topologically, residues 299–426 (RQKTDILKVY…SRQRLLNPSC (128 aa)) are cytoplasmic. An S-nitrosocysteine modification is found at Cys346.

This sequence belongs to the pannexin family. In terms of assembly, homoheptameric. S-nitrosylation inhibits channel currents and ATP release. In terms of processing, N-glycosylation may play a role in cell surface targeting. Exists in three glycosylation states: non-glycosylated (GLY0), high-mannose glycosylated (GLY1), and fully mature glycosylated (GLY2). Post-translationally, phosphorylated at Tyr-198 by SRC. Phosphorylation activates ATP release. Constitutively phosphorylated in vascular smooth muscle cells. Cleaved by CASP3 and CASP7 during apoptosis. Cleavage opens the channel for the release of metabolites and induces plasma membrane permeability during apoptosis. In terms of tissue distribution, widely expressed, including in cartilage, skin, spleen and brain.

The protein localises to the cell membrane. It is found in the endoplasmic reticulum membrane. The catalysed reaction is chloride(in) = chloride(out). The enzyme catalyses iodide(out) = iodide(in). It carries out the reaction Ca(2+)(in) = Ca(2+)(out). It catalyses the reaction ATP(in) = ATP(out). The catalysed reaction is K(+)(in) = K(+)(out). The enzyme catalyses Na(+)(in) = Na(+)(out). It carries out the reaction nitrate(in) = nitrate(out). It catalyses the reaction L-aspartate(out) = L-aspartate(in). The catalysed reaction is L-glutamate(out) = L-glutamate(in). The enzyme catalyses D-gluconate(in) = D-gluconate(out). It carries out the reaction spermidine(in) = spermidine(out). Ion channel involved in a variety of physiological functions such as blood pressure regulation, apoptotic cell clearance and oogenesis. Forms anion-selective channels with relatively low conductance and an order of permeabilities: nitrate&gt;iodide&gt;chlroride&gt;&gt;aspartate=glutamate=gluconate. Can release ATP upon activation through phosphorylation or cleavage at C-terminus. May play a role as a Ca(2+)-leak channel to regulate ER Ca(2+) homeostasis. Functionally, during apoptosis and after cleavage by caspases of the C-terminal tail, acts as a plasma membrane channel which mediates the regulated release of find-me signals, such as nucleotides ATP and UTP, and selective plasme membrane permeability. This is Pannexin-1 from Mus musculus (Mouse).